Here is a 356-residue protein sequence, read N- to C-terminus: sn-glycerol-3-phosphate import ATP-binding protein UgpC (356 aa).

The ABC transporter domain maps to 4–235 (LKLQAVTKSW…PASLFVASFI (232 aa)). An ATP-binding site is contributed by 37-44 (GPSGCGKS).

It belongs to the ABC transporter superfamily. sn-glycerol-3-phosphate importer (TC 3.A.1.1.3) family. The complex is composed of two ATP-binding proteins (UgpC), two transmembrane proteins (UgpA and UgpE) and a solute-binding protein (UgpB).

The protein localises to the cell inner membrane. It carries out the reaction sn-glycerol 3-phosphate(out) + ATP + H2O = sn-glycerol 3-phosphate(in) + ADP + phosphate + H(+). Its function is as follows. Part of the ABC transporter complex UgpBAEC involved in sn-glycerol-3-phosphate (G3P) import. Responsible for energy coupling to the transport system. In Escherichia coli O6:K15:H31 (strain 536 / UPEC), this protein is sn-glycerol-3-phosphate import ATP-binding protein UgpC.